Here is a 376-residue protein sequence, read N- to C-terminus: Carboxylic ester hydrolase LipN (376 aa).

Catalysis depends on residues Ser216, Asp316, and His346.

The protein belongs to the 'GDXG' lipolytic enzyme family.

It localises to the cytoplasm. The catalysed reaction is a carboxylic ester + H2O = an alcohol + a carboxylate + H(+). The enzyme catalyses an acetyl ester + H2O = an aliphatic alcohol + acetate + H(+). It catalyses the reaction a butanoate ester + H2O = an aliphatic alcohol + butanoate + H(+). It carries out the reaction an octanoate ester + H2O = an aliphatic alcohol + octanoate + H(+). The catalysed reaction is decanoate ester + H2O = decanoate + an aliphatic alcohol + H(+). The enzyme catalyses a dodecanoate ester + H2O = an aliphatic alcohol + dodecanoate + H(+). It catalyses the reaction 1,2,3-tributanoylglycerol + H2O = dibutanoylglycerol + butanoate + H(+). It carries out the reaction 4-acetoxyphenol + H2O = hydroquinone + acetate + H(+). Its activity is regulated as follows. Completely inhibited by tetrahydrolipstatin (THL), RHC-80267 and N-bromosuccinimide. Its function is as follows. Non specific carboxylic ester hydrolase. Hydrolyzes various pNP-esters, with a preference for short carbon chain substrates. Can also hydrolyze tributyrin to di- and monobutyrin and 4-hydroxyphenylacetate to hydroquinone. The polypeptide is Carboxylic ester hydrolase LipN (Mycobacterium tuberculosis (strain ATCC 25618 / H37Rv)).